A 413-amino-acid polypeptide reads, in one-letter code: Zinc finger CCCH domain-containing protein 6 (413 aa).

Disordered regions lie at residues 28 to 61 (PSQVGSESQDHLQAKSPLASHPSDDNLPPGFGGP), 159 to 191 (DSASDFPTQSGVDVGTEPSITDENTSTSSTLPA), and 333 to 356 (QPGGGPNPEMVNSSNNNQRPRDSK). Polar residues predominate over residues 176 to 189 (PSITDENTSTSSTL). Residues 357–385 (PKIMKACMYFNSARGCRHGANCMYQHDAT) form a C3H1-type zinc finger. Polar residues predominate over residues 389–403 (PRNLNNGNINTSDMQ). Residues 389 to 413 (PRNLNNGNINTSDMQNAKRMRFDRD) form a disordered region.

In Arabidopsis thaliana (Mouse-ear cress), this protein is Zinc finger CCCH domain-containing protein 6.